Here is a 193-residue protein sequence, read N- to C-terminus: Oocyte-secreted protein 3 (193 aa).

A signal peptide spans Met-1–Gln-22. Asn-64, Asn-130, Asn-148, Asn-151, Asn-165, and Asn-178 each carry an N-linked (GlcNAc...) asparagine glycan.

Belongs to the PLAC1 family.

The protein localises to the secreted. In Homo sapiens (Human), this protein is Oocyte-secreted protein 3.